The primary structure comprises 476 residues: TOM1-like protein 1 (476 aa).

One can recognise a VHS domain in the interval 22–154; the sequence is ATFAGVQTED…DLVKKGVQFP (133 aa). Residues 155–179 form a disordered region; it reads PSEAEAETARQETAQISSNPPTSVP. Polar residues predominate over residues 170–179; that stretch reads ISSNPPTSVP. Position 171 is a phosphoserine (S171). The GAT domain maps to 200-288; the sequence is EQIGKLHSEL…AILGYERFTR (89 aa). The segment covering 298–314 has biased composition (polar residues); it reads KNQKEATNTTSEPSAPS. A disordered region spans residues 298 to 327; that stretch reads KNQKEATNTTSEPSAPSQDLLDLSPSPRMP. 3 positions are modified to phosphoserine: S314, S321, and S323. The tract at residues 392 to 395 is interaction with GRB2; it reads YDNF. The SH3-binding signature appears at 421–425; that stretch reads LPPLP. Residues 442-445 are interaction with PIK3R1; sequence YEVM. Y460 carries the phosphotyrosine modification. Positions 460 to 463 match the SH2-binding motif; sequence YEEI.

This sequence belongs to the TOM1 family. In terms of assembly, interacts with FYN, GRB2 and PIK3R1 when phosphorylated. Interacts with LYN. Phosphorylated on tyrosines by FYN and LYN.

The protein resides in the golgi apparatus. It is found in the golgi stack. The protein localises to the endosome membrane. It localises to the cytoplasm. Its subcellular location is the membrane. Its function is as follows. Probable adapter protein involved in signaling pathways. Interacts with the SH2 and SH3 domains of various signaling proteins when it is phosphorylated. May promote FYN activation, possibly by disrupting intramolecular SH3-dependent interactions. The protein is TOM1-like protein 1 (TOM1L1) of Homo sapiens (Human).